Consider the following 378-residue polypeptide: Poly(3-hydroxyalkanoate) polymerase subunit PhaC (378 aa).

The 273-residue stretch at 84–356 (PVLIVYALVN…QSFPVGHIGM (273 aa)) folds into the AB hydrolase-1 domain.

It belongs to the PHA/PHB synthase family. Type III PhaC subfamily. In terms of assembly, forms a heterodimer with PhaE, which may multimerize in the presence of 3-hydroxybutyryl-CoA. Both subunits are required for PHB synthesis in E.coli and in PHA-negative A.eutrophus.

It is found in the cytoplasm. The enzyme catalyses (3R)-3-hydroxybutanoyl-CoA + [(3R)-hydroxybutanoate](n) = [(3R)-hydroxybutanoate](n+1) + CoA. It functions in the pathway biopolymer metabolism; poly-(R)-3-hydroxybutanoate biosynthesis. When expressed in E.coli with Synechocystis PhaE and C.necator PhaA and PhaB, confers the ability to synthesize up to 13% (w/w) poly(3-hydroxybutyrate) (PHB) depending on the carbon source; all 4 genes are necessary for PHB production. Cell-free in vitro coexpression with PhaE gives a heterodimer able to polymerize 3-hydroxybutyrate-CoA. This chain is Poly(3-hydroxyalkanoate) polymerase subunit PhaC, found in Synechocystis sp. (strain ATCC 27184 / PCC 6803 / Kazusa).